The following is a 198-amino-acid chain: NAD(P)H-quinone oxidoreductase chain 6 (198 aa).

Helical transmembrane passes span 9 to 29, 32 to 52, 61 to 81, 100 to 120, and 145 to 165; these read YISFLILAFLVIGAALGVVLL, IVYSAFLLGGVFLSISGIYIL, AQVLVYVGAVSVLILFAIMLV, TALVCTGIFALLSTMVLITPW, and LLPFELASVLLLMAMVGAIIL.

It belongs to the complex I subunit 6 family.

The protein resides in the membrane. The catalysed reaction is a plastoquinone + NADH + (n+1) H(+)(in) = a plastoquinol + NAD(+) + n H(+)(out). It carries out the reaction a plastoquinone + NADPH + (n+1) H(+)(in) = a plastoquinol + NADP(+) + n H(+)(out). In terms of biological role, NDH-1 shuttles electrons from NAD(P)H, via FMN and iron-sulfur (Fe-S) centers, to quinones in the respiratory chain. The immediate electron acceptor for the enzyme in this species is believed to be plastoquinone. Couples the redox reaction to proton translocation (for every two electrons transferred, four hydrogen ions are translocated across the cytoplasmic membrane), and thus conserves the redox energy in a proton gradient. This is NAD(P)H-quinone oxidoreductase chain 6 (ndhG) from Synechocystis sp. (strain ATCC 27184 / PCC 6803 / Kazusa).